Consider the following 881-residue polypeptide: Valine--tRNA ligase (881 aa).

The short motif at 42–52 (PNITGDLHVGH) is the 'HIGH' region element. The short motif at 554 to 558 (KMSKS) is the 'KMSKS' region element. K557 lines the ATP pocket.

This sequence belongs to the class-I aminoacyl-tRNA synthetase family. ValS type 1 subfamily. Monomer.

It localises to the cytoplasm. It catalyses the reaction tRNA(Val) + L-valine + ATP = L-valyl-tRNA(Val) + AMP + diphosphate. Its function is as follows. Catalyzes the attachment of valine to tRNA(Val). As ValRS can inadvertently accommodate and process structurally similar amino acids such as threonine, to avoid such errors, it has a 'posttransfer' editing activity that hydrolyzes mischarged Thr-tRNA(Val) in a tRNA-dependent manner. The polypeptide is Valine--tRNA ligase (Wigglesworthia glossinidia brevipalpis).